Consider the following 139-residue polypeptide: Transcription antitermination protein NusB (139 aa).

This sequence belongs to the NusB family.

Involved in transcription antitermination. Required for transcription of ribosomal RNA (rRNA) genes. Binds specifically to the boxA antiterminator sequence of the ribosomal RNA (rrn) operons. The protein is Transcription antitermination protein NusB of Idiomarina loihiensis (strain ATCC BAA-735 / DSM 15497 / L2-TR).